A 289-amino-acid chain; its full sequence is (+)-kolavelool synthase (289 aa).

It belongs to the diterpene synthase family.

The enzyme catalyses (+)-kolavenyl diphosphate + H2O = (+)-kolavelool + diphosphate. Its function is as follows. Involved in the biosynthesis of (+)-O-methylkolavelool. Catalyzes the biosynthesis of (+)-kolavelool from (+)-kolavenyl diphosphate via the release of the diphosphate moiety through the nucleophilic addition of a water molecule. In Herpetosiphon aurantiacus (strain ATCC 23779 / DSM 785 / 114-95), this protein is (+)-kolavelool synthase.